The following is a 310-amino-acid chain: Elongation factor Ts (310 aa).

Residues 80 to 83 (TDFV) form an involved in Mg(2+) ion dislocation from EF-Tu region.

It belongs to the EF-Ts family.

It localises to the cytoplasm. Associates with the EF-Tu.GDP complex and induces the exchange of GDP to GTP. It remains bound to the aminoacyl-tRNA.EF-Tu.GTP complex up to the GTP hydrolysis stage on the ribosome. The chain is Elongation factor Ts from Beijerinckia indica subsp. indica (strain ATCC 9039 / DSM 1715 / NCIMB 8712).